The chain runs to 245 residues: tRNA1(Val) (adenine(37)-N6)-methyltransferase (245 aa).

It belongs to the methyltransferase superfamily. tRNA (adenine-N(6)-)-methyltransferase family.

Its subcellular location is the cytoplasm. The enzyme catalyses adenosine(37) in tRNA1(Val) + S-adenosyl-L-methionine = N(6)-methyladenosine(37) in tRNA1(Val) + S-adenosyl-L-homocysteine + H(+). Functionally, specifically methylates the adenine in position 37 of tRNA(1)(Val) (anticodon cmo5UAC). The chain is tRNA1(Val) (adenine(37)-N6)-methyltransferase (yfiC) from Escherichia coli (strain K12).